The following is a 186-amino-acid chain: Elongation factor P (186 aa).

It belongs to the elongation factor P family.

Its subcellular location is the cytoplasm. It participates in protein biosynthesis; polypeptide chain elongation. Functionally, involved in peptide bond synthesis. Stimulates efficient translation and peptide-bond synthesis on native or reconstituted 70S ribosomes in vitro. Probably functions indirectly by altering the affinity of the ribosome for aminoacyl-tRNA, thus increasing their reactivity as acceptors for peptidyl transferase. This Shewanella frigidimarina (strain NCIMB 400) protein is Elongation factor P.